We begin with the raw amino-acid sequence, 259 residues long: Phosphatidylglycerol--prolipoprotein diacylglyceryl transferase (259 aa).

A run of 4 helical transmembrane segments spans residues 16–36 (LAIS…WFYA), 55–75 (FITY…VLLY), 92–112 (EGGM…YLFC), and 117–137 (INFL…LFLG). R138 serves as a coordination point for a 1,2-diacyl-sn-glycero-3-phospho-(1'-sn-glycerol). Transmembrane regions (helical) follow at residues 172 to 192 (QLYE…YATF), 201 to 221 (GLNS…IEIF), and 228 to 248 (IGFI…MLLL).

It belongs to the Lgt family.

It localises to the cell inner membrane. The catalysed reaction is L-cysteinyl-[prolipoprotein] + a 1,2-diacyl-sn-glycero-3-phospho-(1'-sn-glycerol) = an S-1,2-diacyl-sn-glyceryl-L-cysteinyl-[prolipoprotein] + sn-glycerol 1-phosphate + H(+). It participates in protein modification; lipoprotein biosynthesis (diacylglyceryl transfer). Functionally, catalyzes the transfer of the diacylglyceryl group from phosphatidylglycerol to the sulfhydryl group of the N-terminal cysteine of a prolipoprotein, the first step in the formation of mature lipoproteins. The protein is Phosphatidylglycerol--prolipoprotein diacylglyceryl transferase of Rickettsia rickettsii (strain Iowa).